The chain runs to 155 residues: S-ribosylhomocysteine lyase (155 aa).

Residues histidine 58, histidine 62, and cysteine 125 each contribute to the Fe cation site.

This sequence belongs to the LuxS family. In terms of assembly, homodimer. It depends on Fe cation as a cofactor.

The catalysed reaction is S-(5-deoxy-D-ribos-5-yl)-L-homocysteine = (S)-4,5-dihydroxypentane-2,3-dione + L-homocysteine. Involved in the synthesis of autoinducer 2 (AI-2) which is secreted by bacteria and is used to communicate both the cell density and the metabolic potential of the environment. The regulation of gene expression in response to changes in cell density is called quorum sensing. Catalyzes the transformation of S-ribosylhomocysteine (RHC) to homocysteine (HC) and 4,5-dihydroxy-2,3-pentadione (DPD). This Helicobacter pylori (strain Shi470) protein is S-ribosylhomocysteine lyase.